The chain runs to 170 residues: Cyclic pyranopterin monophosphate synthase 1 (170 aa).

Residues 79–81 (LCH) and 116–117 (ME) contribute to the substrate site. The active site involves Asp-131.

The protein belongs to the MoaC family. Homohexamer; trimer of dimers.

It carries out the reaction (8S)-3',8-cyclo-7,8-dihydroguanosine 5'-triphosphate = cyclic pyranopterin phosphate + diphosphate. The protein operates within cofactor biosynthesis; molybdopterin biosynthesis. Its function is as follows. Catalyzes the conversion of (8S)-3',8-cyclo-7,8-dihydroguanosine 5'-triphosphate to cyclic pyranopterin monophosphate (cPMP). In Mycobacterium bovis (strain ATCC BAA-935 / AF2122/97), this protein is Cyclic pyranopterin monophosphate synthase 1 (moaC1).